Reading from the N-terminus, the 179-residue chain is MARFQEFYKEKVVPGLIEKFGYKSVMEVPRITKITLNMGLGEAIADKKIIENAVGDLTKIAGQKPVVTKARKAIAGFKIRQGYPIGAMVTLRGRAMYEFLDRFVTVALPRVRDFRGVSGRAFDGRGNYNIGVKEQIIFPEIDYDKIDALRGLNISITTTAKTDDEAKALLASFKFPFRN.

The protein belongs to the universal ribosomal protein uL5 family. As to quaternary structure, part of the 50S ribosomal subunit; part of the 5S rRNA/L5/L18/L25 subcomplex. Contacts the 5S rRNA and the P site tRNA. Forms a bridge to the 30S subunit in the 70S ribosome.

In terms of biological role, this is one of the proteins that bind and probably mediate the attachment of the 5S RNA into the large ribosomal subunit, where it forms part of the central protuberance. In the 70S ribosome it contacts protein S13 of the 30S subunit (bridge B1b), connecting the 2 subunits; this bridge is implicated in subunit movement. Contacts the P site tRNA; the 5S rRNA and some of its associated proteins might help stabilize positioning of ribosome-bound tRNAs. The sequence is that of Large ribosomal subunit protein uL5 from Burkholderia ambifaria (strain MC40-6).